The chain runs to 399 residues: Enolase (399 aa).

Gln152 is a binding site for (2R)-2-phosphoglycerate. Glu194 (proton donor) is an active-site residue. Mg(2+)-binding residues include Asp230, Glu273, and Asp301. Residues Lys326, Arg355, Ser356, and Lys377 each coordinate (2R)-2-phosphoglycerate. The active-site Proton acceptor is Lys326.

The protein belongs to the enolase family. It depends on Mg(2+) as a cofactor.

The protein resides in the cytoplasm. It localises to the secreted. Its subcellular location is the cell surface. The catalysed reaction is (2R)-2-phosphoglycerate = phosphoenolpyruvate + H2O. It functions in the pathway carbohydrate degradation; glycolysis; pyruvate from D-glyceraldehyde 3-phosphate: step 4/5. Functionally, catalyzes the reversible conversion of 2-phosphoglycerate (2-PG) into phosphoenolpyruvate (PEP). It is essential for the degradation of carbohydrates via glycolysis. The sequence is that of Enolase from Methanocorpusculum labreanum (strain ATCC 43576 / DSM 4855 / Z).